The primary structure comprises 150 residues: Large ribosomal subunit protein bL9 (150 aa).

The protein belongs to the bacterial ribosomal protein bL9 family.

Functionally, binds to the 23S rRNA. The polypeptide is Large ribosomal subunit protein bL9 (Janthinobacterium sp. (strain Marseille) (Minibacterium massiliensis)).